Here is a 406-residue protein sequence, read N- to C-terminus: 5-cytosine rRNA methyltransferase NSUN4 (406 aa).

S-adenosyl-L-methionine-binding residues include Gly-207, Gly-208, Lys-209, Asp-226, Arg-231, Asp-259, Gly-260, and Asp-277. The active-site Nucleophile is the Cys-332.

It belongs to the class I-like SAM-binding methyltransferase superfamily. RsmB/NOP family.

The protein resides in the mitochondrion. It carries out the reaction a cytidine in rRNA + S-adenosyl-L-methionine = a 5-methylcytidine in rRNA + S-adenosyl-L-homocysteine + H(+). The catalysed reaction is a cytidine in mRNA + S-adenosyl-L-methionine = a 5-methylcytidine in mRNA + S-adenosyl-L-homocysteine + H(+). Involved in mitochondrial ribosome large subunit biogenesis. Functionally, mitochondrial RNA cytosine C(5)-methyltransferase that methylates cytosine to 5-methylcytosine (m5C) in various RNAs, such as rRNAs, mRNAs and some long non-coding RNAs (lncRNAs). Involved in mitochondrial ribosome small subunit (SSU) maturation by catalyzing methylation of mitochondrial 12S rRNA. This Xenopus tropicalis (Western clawed frog) protein is 5-cytosine rRNA methyltransferase NSUN4 (nsun4).